A 261-amino-acid chain; its full sequence is Glucose 1-dehydrogenase 2 (261 aa).

11-35 serves as a coordination point for NADP(+); sequence VVTGGSKGLGRAMAVRFGQEQSKVV. Residue serine 145 participates in substrate binding. Catalysis depends on tyrosine 158, which acts as the Proton acceptor.

This sequence belongs to the short-chain dehydrogenases/reductases (SDR) family. Homotetramer.

The enzyme catalyses D-glucose + NAD(+) = D-glucono-1,5-lactone + NADH + H(+). It catalyses the reaction D-glucose + NADP(+) = D-glucono-1,5-lactone + NADPH + H(+). The sequence is that of Glucose 1-dehydrogenase 2 (gdhII) from Priestia megaterium (Bacillus megaterium).